A 101-amino-acid polypeptide reads, in one-letter code: NAD(P)H-quinone oxidoreductase subunit 4L, chloroplastic (101 aa).

The next 3 helical transmembrane spans lie at 2 to 22 (ILEH…YGLI), 32 to 52 (MCLE…SDFF), and 61 to 81 (IFCI…LAIV).

This sequence belongs to the complex I subunit 4L family. As to quaternary structure, NDH is composed of at least 16 different subunits, 5 of which are encoded in the nucleus.

The protein resides in the plastid. Its subcellular location is the chloroplast thylakoid membrane. The catalysed reaction is a plastoquinone + NADH + (n+1) H(+)(in) = a plastoquinol + NAD(+) + n H(+)(out). It catalyses the reaction a plastoquinone + NADPH + (n+1) H(+)(in) = a plastoquinol + NADP(+) + n H(+)(out). In terms of biological role, NDH shuttles electrons from NAD(P)H:plastoquinone, via FMN and iron-sulfur (Fe-S) centers, to quinones in the photosynthetic chain and possibly in a chloroplast respiratory chain. The immediate electron acceptor for the enzyme in this species is believed to be plastoquinone. Couples the redox reaction to proton translocation, and thus conserves the redox energy in a proton gradient. This chain is NAD(P)H-quinone oxidoreductase subunit 4L, chloroplastic, found in Draba nemorosa (Woodland whitlowgrass).